The sequence spans 225 residues: Cyanamide hydratase DDI2 (225 aa).

The HD domain maps to 52-162 (VLNHSLRVFQ…LQIATTLDNV (111 aa)).

Belongs to the cyanamide dehydrase family. As to quaternary structure, homohexamer. Requires Zn(2+) as cofactor.

It catalyses the reaction urea = cyanamide + H2O. Functionally, cyanamide hydratase involved in the detoxification and/or utilization of cyanamide, a toxic nitrile compound distributed widely in the environment. This is Cyanamide hydratase DDI2 from Saccharomyces cerevisiae (strain ATCC 204508 / S288c) (Baker's yeast).